The following is a 324-amino-acid chain: Casein kinase I (324 aa).

The region spanning 9 to 278 (YALGKKLGSG…LRRLLKDLFI (270 aa)) is the Protein kinase domain. ATP contacts are provided by residues 15-23 (LGSGSFGDI) and K38. D128 functions as the Proton acceptor in the catalytic mechanism.

Belongs to the protein kinase superfamily. CK1 Ser/Thr protein kinase family. Casein kinase I subfamily. In terms of assembly, interacts with rhoptry protein RON3; the interaction is direct. Interacts with CK2alpha; the interaction is direct. Interacts with nucleosome assembly protein NAPL. Interacts with RAB5b. Interacts with host GAPVD1. Interacts with host SNX22. Mg(2+) is required as a cofactor.

It localises to the cytoplasm. Its subcellular location is the cytoplasmic vesicle. The protein resides in the secretory vesicle. It is found in the microneme. The protein localises to the secreted. It localises to the host cell surface. It carries out the reaction L-seryl-[protein] + ATP = O-phospho-L-seryl-[protein] + ADP + H(+). The catalysed reaction is L-threonyl-[protein] + ATP = O-phospho-L-threonyl-[protein] + ADP + H(+). Functionally, serine/threonine-protein kinase likely to be involved in many cellular processes. Phosphorylates rhoptry protein RON3, nucleosome assembly protein NAPL and DNA/RNA-binding protein ALBA4 in vitro. The chain is Casein kinase I from Plasmodium falciparum (isolate Dd2).